The sequence spans 421 residues: Peroxisomal succinyl-coenzyme A thioesterase (421 aa).

Ser232 acts as the Charge relay system in catalysis. At Lys313 the chain carries N6-succinyllysine. Active-site charge relay system residues include Asp326 and His360. The Microbody targeting signal signature appears at 419–421 (CRL).

This sequence belongs to the C/M/P thioester hydrolase family. As to expression, mainly expressed in liver and kidney. Weakly expressed in other tissues including intestine, adrenal gland and adipose tissues.

The protein resides in the peroxisome. The enzyme catalyses succinyl-CoA + H2O = succinate + CoA + H(+). It catalyses the reaction glutaryl-CoA + H2O = glutarate + CoA + H(+). It participates in lipid metabolism; fatty acid metabolism. Catalyzes the hydrolysis of acyl-CoAs into free fatty acids and coenzyme A (CoASH), regulating their respective intracellular levels. In contrast to its human ortholog, functions essentially as a succinyl-CoA thioesterase with no activity with medium to long chain saturated acyl-CoAs and with a low activity toward glutaryl-CoA. This chain is Peroxisomal succinyl-coenzyme A thioesterase (Acot4), found in Mus musculus (Mouse).